The following is a 209-amino-acid chain: MSSGDEAVAAAAQRARVTAARNIPVFGDLPLPADTANLREGANLDDALLALLPLVGVWRGEGEGRAAHGDYRFGQQIVVSHDGGDYLNWEARSWHLDDDGEYARPGLRETGFWRFVSDPGDPEESQAIELLLAHSAGYIELFYGRPLNQSSWELVTDALARSKSGMLVGGAKRLYGIIEGGDLAYVEERVDADGGLVPHLSARLTRFVG.

A GXWXGXG motif is present at residues 56–62; the sequence is GVWRGEG. Positions 172 and 199 each coordinate heme b.

It belongs to the nitrobindin family. As to quaternary structure, homodimer. Heme b is required as a cofactor.

It catalyses the reaction peroxynitrite = nitrate. It functions in the pathway nitrogen metabolism. In terms of biological role, heme-binding protein able to scavenge peroxynitrite and to protect free L-tyrosine against peroxynitrite-mediated nitration, by acting as a peroxynitrite isomerase that converts peroxynitrite to nitrate. Therefore, this protein likely plays a role in peroxynitrite sensing and in the detoxification of reactive nitrogen and oxygen species (RNS and ROS, respectively). Is able to bind nitric oxide (NO) in vitro, but may act as a sensor of peroxynitrite levels in vivo. This Mycolicibacterium vanbaalenii (strain DSM 7251 / JCM 13017 / BCRC 16820 / KCTC 9966 / NRRL B-24157 / PYR-1) (Mycobacterium vanbaalenii) protein is Peroxynitrite isomerase 2.